Consider the following 149-residue polypeptide: MVYKTKLGEMEISDESIFTFEKGIPGFEHLRKFALVFPQETFPIGWLLSLEDPEVGLPVVDPKLVRADYDPVVPSEDLEEIEAENQEALLFFCVLTIPPGKPEKTTINLRAPIILNQKKKKGIQTILENEDYQLRHLLSEEMERSKTVV.

The protein belongs to the FliW family. Interacts with translational regulator CsrA and flagellin(s).

Its subcellular location is the cytoplasm. Acts as an anti-CsrA protein, binds CsrA and prevents it from repressing translation of its target genes, one of which is flagellin. Binds to flagellin and participates in the assembly of the flagellum. In Thermotoga sp. (strain RQ2), this protein is Flagellar assembly factor FliW.